Reading from the N-terminus, the 708-residue chain is Polyribonucleotide nucleotidyltransferase (708 aa).

The Mg(2+) site is built by aspartate 487 and aspartate 493. One can recognise a KH domain in the interval 554–613 (PRIHTMKISADKIKDVIGKGGAVIRALTEETGTTIEIEDDGTIKIAATEGAAAKEAIRRI). The S1 motif domain occupies 623 to 691 (GVIYTGKVAR…RQGRVRLSMK (69 aa)).

Belongs to the polyribonucleotide nucleotidyltransferase family. Component of the RNA degradosome, which is a multiprotein complex involved in RNA processing and mRNA degradation. Mg(2+) serves as cofactor.

Its subcellular location is the cytoplasm. The catalysed reaction is RNA(n+1) + phosphate = RNA(n) + a ribonucleoside 5'-diphosphate. Its function is as follows. Involved in mRNA degradation. Catalyzes the phosphorolysis of single-stranded polyribonucleotides processively in the 3'- to 5'-direction. The protein is Polyribonucleotide nucleotidyltransferase of Vibrio vulnificus (strain CMCP6).